An 87-amino-acid polypeptide reads, in one-letter code: MKLSIFFVLFFIAIAYCQPEFLDDEEDEVEETLPVAEEGREKSCITWRNSCMHNDKGCCFPWSCVCWSQTVSRNSSRKEKKCQCRLW.

An N-terminal signal peptide occupies residues 1–17; it reads MKLSIFFVLFFIAIAYC. A propeptide spanning residues 18–40 is cleaved from the precursor; sequence QPEFLDDEEDEVEETLPVAEEGR. Cystine bridges form between C44-C59, C51-C64, C58-C84, and C66-C82.

This sequence belongs to the neurotoxin omega-lctx family. In terms of tissue distribution, expressed by the venom gland.

The protein localises to the secreted. Its function is as follows. Modulates Cav2.1/CACNA1A voltage-gated calcium channels (P/Q-type currents) in rat cerebellar Purkinje cells and hippocampal CA1-CA3 neurons. At saturating concentrations (&gt;10 nM) decelerates activation kinetics and slightly increases peak amplitude without affecting deactivation kinetics. In vivo, does not cause death when intravenously injected into mice. In rat models, through its activity on Cav2.1/CACNA1A, has an ameliorative effect on memory defects provoked by hyperstimulation of N-methyl-D-aspartate receptors (NMDARs) in the hippocampus. The sequence is that of Omega-lycotoxin-Am1a from Alopecosa marikovskyi (Wolf spider).